The primary structure comprises 116 residues: Small ribosomal subunit protein uS13 (116 aa).

Residues 92 to 116 (RRGLPVRGQNTKNNARTRKGAKRSR) form a disordered region. A compositionally biased stretch (basic residues) spans 106 to 116 (ARTRKGAKRSR).

The protein belongs to the universal ribosomal protein uS13 family. As to quaternary structure, part of the 30S ribosomal subunit. Forms a loose heterodimer with protein S19. Forms two bridges to the 50S subunit in the 70S ribosome.

In terms of biological role, located at the top of the head of the 30S subunit, it contacts several helices of the 16S rRNA. In the 70S ribosome it contacts the 23S rRNA (bridge B1a) and protein L5 of the 50S subunit (bridge B1b), connecting the 2 subunits; these bridges are implicated in subunit movement. Contacts the tRNAs in the A and P-sites. This is Small ribosomal subunit protein uS13 from Lactobacillus delbrueckii subsp. bulgaricus (strain ATCC 11842 / DSM 20081 / BCRC 10696 / JCM 1002 / NBRC 13953 / NCIMB 11778 / NCTC 12712 / WDCM 00102 / Lb 14).